The chain runs to 297 residues: Adrenocorticotropic hormone receptor (297 aa).

The Extracellular portion of the chain corresponds to 1–23 (MKHIITPYEHTNDTARNNSDCPD). N-linked (GlcNAc...) asparagine glycans are attached at residues Asn12 and Asn17. Intrachain disulfides connect Cys21–Cys253 and Cys245–Cys251. Residues 24-49 (VVLPEEIFFTISIIGVLENLIVLLAV) traverse the membrane as a helical segment. Over 50–58 (VKNKNLQCP) the chain is Cytoplasmic. The helical transmembrane segment at 59-79 (MYFFICSLAISDMLGSLYKIL) threads the bilayer. Residues 80–104 (ENILIMFRNRGYLQPRGNFESTADD) lie on the Extracellular side of the membrane. Residues 105 to 126 (IIDCMFILSLLGSIFSLSVIAA) traverse the membrane as a helical segment. Residues 127 to 147 (DRYITIFHALQYHSIVTMRRT) lie on the Cytoplasmic side of the membrane. The chain crosses the membrane as a helical span at residues 148–168 (IITLTVIWIFCTGSGIAMVIF). At 169–180 (SHHVPTVLTFTS) the chain is on the extracellular side. The helical transmembrane segment at 181–199 (LFPLMLVFILCLYIHMFLL) threads the bilayer. Residues 200 to 217 (ARSHARKISTLPRANMKG) lie on the Cytoplasmic side of the membrane. A helical transmembrane segment spans residues 218–244 (AITLTILLGVFIFCWAPFILHVLLMTF). Residues 245–256 (CPNNPYCVCYMS) lie on the Extracellular side of the membrane. A helical membrane pass occupies residues 257-278 (LFQINGMLIMCNAVIDPFIYAF). The Cytoplasmic portion of the chain corresponds to 279 to 297 (RSPELRDAFKKMFSCHRYQ). Cys293 carries S-palmitoyl cysteine lipidation.

This sequence belongs to the G-protein coupled receptor 1 family. In terms of assembly, homodimer. Interacts with corticotropin (ACTH). Interacts with MRAP; this interaction targets MC2R to the plasma membrane. Interacts with MRAP2; competing with MRAP for binding to MC2R and impairing the binding of corticotropin (ACTH). Post-translationally, ubiquitinated by MGRN1 that may be involved in post-endocytic trafficking and/or degradation of internalized receptor.

The protein localises to the cell membrane. Its function is as follows. Hormone receptor primarily expressed in adrenal cortex that plays a key role in regulating adrenocortical function. Upon corticotropin (ACTH) binding, facilitates the release of adrenal glucocorticoids, including cortisol and corticosterone. In addition, MC2R is required for fetal and neonatal adrenal gland development. Mechanistically, activates adenylate cyclase (cAMP), the MAPK cascade as well as the cAMP-dependent protein kinase A pathway leading to steroidogenic factor 1/NR5A1-mediated transcriptional activation. This chain is Adrenocorticotropic hormone receptor (MC2R), found in Mesocricetus auratus (Golden hamster).